We begin with the raw amino-acid sequence, 79 residues long: Acyl carrier protein (79 aa).

Positions 2 to 77 (SDIEARVRKI…HAIDYIKSNA (76 aa)) constitute a Carrier domain. Position 37 is an O-(pantetheine 4'-phosphoryl)serine (S37).

It belongs to the acyl carrier protein (ACP) family. In terms of processing, 4'-phosphopantetheine is transferred from CoA to a specific serine of apo-ACP by AcpS. This modification is essential for activity because fatty acids are bound in thioester linkage to the sulfhydryl of the prosthetic group.

Its subcellular location is the cytoplasm. Its pathway is lipid metabolism; fatty acid biosynthesis. Its function is as follows. Carrier of the growing fatty acid chain in fatty acid biosynthesis. The protein is Acyl carrier protein of Xylella fastidiosa (strain M23).